Consider the following 266-residue polypeptide: 3',5'-cyclic-nucleotide phosphodiesterase alr5338 (266 aa).

Fe cation contacts are provided by Asp-14, His-16, Asp-56, Asn-86, His-155, His-194, and His-196. Residues His-16, Asp-56, and 86 to 87 each bind AMP; that span reads NH. AMP is bound at residue His-196.

This sequence belongs to the cyclic nucleotide phosphodiesterase class-III family. Fe(2+) serves as cofactor. Requires Mn(2+) as cofactor.

It carries out the reaction a nucleoside 3',5'-cyclic phosphate + H2O = a nucleoside 5'-phosphate + H(+). It catalyses the reaction 3',5'-cyclic AMP + H2O = AMP + H(+). The enzyme catalyses 3',5'-cyclic GMP + H2O = GMP + H(+). Its activity is regulated as follows. Activated by iron and manganese. Its function is as follows. Hydrolyzes cAMP to 5'-AMP. Plays an important regulatory role in modulating the intracellular concentration of cAMP, thereby influencing cAMP-dependent processes. Can also hydrolyze cGMP. The chain is 3',5'-cyclic-nucleotide phosphodiesterase alr5338 from Nostoc sp. (strain PCC 7120 / SAG 25.82 / UTEX 2576).